Here is a 515-residue protein sequence, read N- to C-terminus: Maturase K (515 aa).

Belongs to the intron maturase 2 family. MatK subfamily.

It localises to the plastid. Its subcellular location is the chloroplast. Functionally, usually encoded in the trnK tRNA gene intron. Probably assists in splicing its own and other chloroplast group II introns. This is Maturase K from Pinus yunnanensis (Yunnan pine).